A 920-amino-acid polypeptide reads, in one-letter code: Isoleucine--tRNA ligase (920 aa).

Positions Pro-58 to His-68 match the 'HIGH' region motif. L-isoleucyl-5'-AMP is bound at residue Glu-569. The 'KMSKS' region signature appears at Lys-610–Ser-614. Lys-613 is an ATP binding site. Residues Cys-895, Cys-898, Cys-910, and Cys-913 each contribute to the Zn(2+) site.

The protein belongs to the class-I aminoacyl-tRNA synthetase family. IleS type 1 subfamily. Monomer. Zn(2+) is required as a cofactor.

It is found in the cytoplasm. The enzyme catalyses tRNA(Ile) + L-isoleucine + ATP = L-isoleucyl-tRNA(Ile) + AMP + diphosphate. Functionally, catalyzes the attachment of isoleucine to tRNA(Ile). As IleRS can inadvertently accommodate and process structurally similar amino acids such as valine, to avoid such errors it has two additional distinct tRNA(Ile)-dependent editing activities. One activity is designated as 'pretransfer' editing and involves the hydrolysis of activated Val-AMP. The other activity is designated 'posttransfer' editing and involves deacylation of mischarged Val-tRNA(Ile). This chain is Isoleucine--tRNA ligase, found in Helicobacter pylori (strain J99 / ATCC 700824) (Campylobacter pylori J99).